The following is a 76-amino-acid chain: Conotoxin Vc6.3 (76 aa).

The first 22 residues, 1–22, serve as a signal peptide directing secretion; it reads MKLTCVMIVAVLFLTANTFATA. The propeptide occupies 23 to 50; that stretch reads DDPRNGLRDLFSIAHHEMKNPEASKLNE. 3 disulfide bridges follow: Cys-52-Cys-66, Cys-59-Cys-70, and Cys-67-Cys-75.

Belongs to the conotoxin O1 superfamily. As to expression, expressed by the venom duct.

The protein localises to the secreted. The chain is Conotoxin Vc6.3 from Conus victoriae (Queen Victoria cone).